The primary structure comprises 352 residues: Phosphoribosylformylglycinamidine cyclo-ligase (352 aa).

It belongs to the AIR synthase family.

The protein localises to the cytoplasm. The enzyme catalyses 2-formamido-N(1)-(5-O-phospho-beta-D-ribosyl)acetamidine + ATP = 5-amino-1-(5-phospho-beta-D-ribosyl)imidazole + ADP + phosphate + H(+). It functions in the pathway purine metabolism; IMP biosynthesis via de novo pathway; 5-amino-1-(5-phospho-D-ribosyl)imidazole from N(2)-formyl-N(1)-(5-phospho-D-ribosyl)glycinamide: step 2/2. This Pseudomonas putida (strain W619) protein is Phosphoribosylformylglycinamidine cyclo-ligase.